The primary structure comprises 330 residues: Ketol-acid reductoisomerase (NADP(+)) (330 aa).

In terms of domain architecture, KARI N-terminal Rossmann spans 1-181 (MKVFYDSDFK…GLSRAGVIQT (181 aa)). NADP(+) is bound by residues 24–27 (YGSQ), Arg47, Ser52, and 82–85 (DELQ). The active site involves His107. Residue Gly133 coordinates NADP(+). Positions 182–327 (TFKEETETDL…AKLRKMCGLE (146 aa)) constitute a KARI C-terminal knotted domain. Positions 190, 194, 226, and 230 each coordinate Mg(2+). Residue Ser251 participates in substrate binding.

This sequence belongs to the ketol-acid reductoisomerase family. It depends on Mg(2+) as a cofactor.

The catalysed reaction is (2R)-2,3-dihydroxy-3-methylbutanoate + NADP(+) = (2S)-2-acetolactate + NADPH + H(+). It catalyses the reaction (2R,3R)-2,3-dihydroxy-3-methylpentanoate + NADP(+) = (S)-2-ethyl-2-hydroxy-3-oxobutanoate + NADPH + H(+). It functions in the pathway amino-acid biosynthesis; L-isoleucine biosynthesis; L-isoleucine from 2-oxobutanoate: step 2/4. Its pathway is amino-acid biosynthesis; L-valine biosynthesis; L-valine from pyruvate: step 2/4. Its function is as follows. Involved in the biosynthesis of branched-chain amino acids (BCAA). Catalyzes an alkyl-migration followed by a ketol-acid reduction of (S)-2-acetolactate (S2AL) to yield (R)-2,3-dihydroxy-isovalerate. In the isomerase reaction, S2AL is rearranged via a Mg-dependent methyl migration to produce 3-hydroxy-3-methyl-2-ketobutyrate (HMKB). In the reductase reaction, this 2-ketoacid undergoes a metal-dependent reduction by NADPH to yield (R)-2,3-dihydroxy-isovalerate. The chain is Ketol-acid reductoisomerase (NADP(+)) from Methanococcus maripaludis (strain C7 / ATCC BAA-1331).